A 236-amino-acid chain; its full sequence is Rho-related GTP-binding protein RhoV (236 aa).

The tract at residues 1-27 (MPPRELSEAESSPLRSPTPPPGRGSAS) is disordered. The residue at position 25 (Ser25) is a Phosphoserine. GTP is bound by residues 38 to 45 (GDGAVGKS), 85 to 89 (DTAGQ), and 143 to 146 (TQAD). Cys234 carries the S-palmitoyl cysteine lipid modification.

Belongs to the small GTPase superfamily. Rho family. In terms of assembly, interacts with PAK2. It depends on Mg(2+) as a cofactor.

The protein resides in the cell membrane. The protein localises to the endosome membrane. Its function is as follows. Plays a role in the control of the actin cytoskeleton via activation of the JNK pathway. The chain is Rho-related GTP-binding protein RhoV from Bos taurus (Bovine).